A 237-amino-acid polypeptide reads, in one-letter code: Probable GTP-binding protein EngB (237 aa).

In terms of domain architecture, EngB-type G spans 13 to 188 (TGYEIAFAGR…ASVMAGRLNY (176 aa)). Residues 21-28 (GRSNAGKS), 48-52 (GRTQM), 67-70 (DLPG), 134-137 (TKAD), and 167-169 (FSS) contribute to the GTP site. 2 residues coordinate Mg(2+): Ser-28 and Thr-50. The span at 207–220 (DDLNDELMDQDETS) shows a compositional bias: acidic residues. Positions 207–237 (DDLNDELMDQDETSEFNTENIDDHLDQEPKI) are disordered. Positions 227-237 (IDDHLDQEPKI) are enriched in basic and acidic residues.

This sequence belongs to the TRAFAC class TrmE-Era-EngA-EngB-Septin-like GTPase superfamily. EngB GTPase family. Requires Mg(2+) as cofactor.

Functionally, necessary for normal cell division and for the maintenance of normal septation. The polypeptide is Probable GTP-binding protein EngB (Acinetobacter baylyi (strain ATCC 33305 / BD413 / ADP1)).